A 297-amino-acid polypeptide reads, in one-letter code: Protein phosphatase PTC7 homolog (297 aa).

The N-terminal 27 residues, 1-27 (MFSVLSCGRLVARAVFGGLSQTDSRDY), are a transit peptide targeting the mitochondrion. The region spanning 28–292 (SLVTASCGFG…DDITVLLSIV (265 aa)) is the PPM-type phosphatase domain. Mn(2+) contacts are provided by D71, G72, and D216.

Belongs to the PP2C family. Mg(2+) serves as cofactor. The cofactor is Mn(2+).

Its subcellular location is the mitochondrion matrix. The catalysed reaction is O-phospho-L-seryl-[protein] + H2O = L-seryl-[protein] + phosphate. The enzyme catalyses O-phospho-L-threonyl-[protein] + H2O = L-threonyl-[protein] + phosphate. Its function is as follows. Protein phosphatase which positively regulates biosynthesis of the ubiquinone, coenzyme Q. Dephosphorylates the ubiquinone biosynthesis protein coq7 which is likely to lead to its activation. In Xenopus laevis (African clawed frog), this protein is Protein phosphatase PTC7 homolog (pptc7).